The following is a 199-amino-acid chain: Proteasome subunit beta type-2-B (199 aa).

Position 1 is an N-acetylmethionine (Met1).

Belongs to the peptidase T1B family. In terms of assembly, component of the 20S core complex of the 26S proteasome. The 26S proteasome is composed of a core protease (CP), known as the 20S proteasome, capped at one or both ends by the 19S regulatory particle (RP/PA700). The 20S proteasome core is composed of 28 subunits that are arranged in four stacked rings, resulting in a barrel-shaped structure. The two end rings are each formed by seven alpha subunits, and the two central rings are each formed by seven beta subunits. The catalytic chamber with the active sites is on the inside of the barrel. As to expression, ubiquitous low levels, higher expression in siliques and flowers.

It is found in the cytoplasm. The protein resides in the nucleus. Non-catalytic component of the proteasome, a multicatalytic proteinase complex which is characterized by its ability to cleave peptides with Arg, Phe, Tyr, Leu, and Glu adjacent to the leaving group at neutral or slightly basic pH. The proteasome has an ATP-dependent proteolytic activity. This is Proteasome subunit beta type-2-B (PBD2) from Arabidopsis thaliana (Mouse-ear cress).